A 460-amino-acid polypeptide reads, in one-letter code: Crocetin glucosyltransferase 2 (460 aa).

His19 serves as the catalytic Proton acceptor. His19 provides a ligand contact to an anthocyanidin. UDP-alpha-D-glucose-binding residues include Thr133, Gln333, His348, Trp351, Asn352, Ser353, Glu356, Asp372, and Gln373.

The protein belongs to the UDP-glycosyltransferase family. Mainly expressed in fully developed stigmas.

It carries out the reaction crocetin + UDP-alpha-D-glucose = beta-D-glucosyl crocetin + UDP. It catalyses the reaction beta-D-glucosyl crocetin + UDP-alpha-D-glucose = bis(beta-D-glucosyl) crocetin + UDP. The catalysed reaction is beta-D-gentiobiosyl crocetin + UDP-alpha-D-glucose = beta-D-gentiobiosyl beta-D-glucosyl crocetin + UDP. Crocetin glucosyltransferase involved in the synthesis of crocin, one of the apocarotenoids responsible for the color and bitter taste of saffron. The protein is Crocetin glucosyltransferase 2 (GLT2) of Crocus sativus (Saffron).